A 206-amino-acid polypeptide reads, in one-letter code: Cytidylate kinase (206 aa).

7–15 (GVAASGKSS) serves as a coordination point for ATP.

It belongs to the cytidylate kinase family. Type 1 subfamily.

Its subcellular location is the cytoplasm. It catalyses the reaction CMP + ATP = CDP + ADP. It carries out the reaction dCMP + ATP = dCDP + ADP. The sequence is that of Cytidylate kinase from Deinococcus radiodurans (strain ATCC 13939 / DSM 20539 / JCM 16871 / CCUG 27074 / LMG 4051 / NBRC 15346 / NCIMB 9279 / VKM B-1422 / R1).